Reading from the N-terminus, the 931-residue chain is Bifunctional uridylyltransferase/uridylyl-removing enzyme (931 aa).

The uridylyltransferase stretch occupies residues 1–383; that stretch reads MDSVTPNSRP…KTGNSWRRVP (383 aa). Positions 384–739 are uridylyl-removing; the sequence is ESDDFIVDNN…VGFDPARGVT (356 aa). Positions 499-622 constitute an HD domain; it reads VDEHLIRCIG…VQSVEQMKLL (124 aa). 2 ACT domains span residues 740–822 and 851–931; these read ELTI…AVAR and VIEV…QPAA.

Belongs to the GlnD family. The cofactor is Mg(2+).

The catalysed reaction is [protein-PII]-L-tyrosine + UTP = [protein-PII]-uridylyl-L-tyrosine + diphosphate. It catalyses the reaction [protein-PII]-uridylyl-L-tyrosine + H2O = [protein-PII]-L-tyrosine + UMP + H(+). Its activity is regulated as follows. Uridylyltransferase (UTase) activity is inhibited by glutamine, while glutamine activates uridylyl-removing (UR) activity. Modifies, by uridylylation and deuridylylation, the PII regulatory proteins (GlnB and homologs), in response to the nitrogen status of the cell that GlnD senses through the glutamine level. Under low glutamine levels, catalyzes the conversion of the PII proteins and UTP to PII-UMP and PPi, while under higher glutamine levels, GlnD hydrolyzes PII-UMP to PII and UMP (deuridylylation). Thus, controls uridylylation state and activity of the PII proteins, and plays an important role in the regulation of nitrogen fixation and metabolism. The polypeptide is Bifunctional uridylyltransferase/uridylyl-removing enzyme (Bradyrhizobium sp. (strain BTAi1 / ATCC BAA-1182)).